The sequence spans 597 residues: Gigaxonin (597 aa).

Positions 30–99 constitute a BTB domain; it reads CDAHLVLDGE…IFSGQIRLNE (70 aa). The region spanning 134–236 is the BACK domain; sequence CIGIRDFALH…DSSYLREQML (103 aa). 6 Kelch repeats span residues 274 to 326, 327 to 374, 376 to 421, 422 to 468, 470 to 522, and 528 to 574; these read CIVT…SAEG, FLFV…EIDG, LYIL…AMKK, KIYA…GVAM, LYVF…VYGA, and SIYV…AALR.

Interacts with TBCB. Interacts with CUL3. Part of a complex that contains CUL3, RBX1 and GAN. Interacts (via BTB domain) with UBA1. Interacts (via Kelch domains) with MAP1B (via C-terminus) and MAP1S (via C-terminus). Ubiquitinated by E3 ubiquitin ligase complex formed by CUL3 and RBX1 and probably targeted for proteasome-independent degradation. Expressed in brain, heart and muscle.

The protein resides in the cytoplasm. The protein localises to the cytoskeleton. Its pathway is protein modification; protein ubiquitination. In terms of biological role, probable cytoskeletal component that directly or indirectly plays an important role in neurofilament architecture. May act as a substrate-specific adapter of an E3 ubiquitin-protein ligase complex which mediates the ubiquitination and subsequent proteasomal degradation of target proteins. Controls degradation of TBCB. Controls degradation of MAP1B and MAP1S, and is critical for neuronal maintenance and survival. The protein is Gigaxonin (GAN) of Homo sapiens (Human).